The chain runs to 1356 residues: DNA-directed RNA polymerase subunit beta (1356 aa).

This sequence belongs to the RNA polymerase beta chain family. In terms of assembly, the RNAP catalytic core consists of 2 alpha, 1 beta, 1 beta' and 1 omega subunit. When a sigma factor is associated with the core the holoenzyme is formed, which can initiate transcription.

The catalysed reaction is RNA(n) + a ribonucleoside 5'-triphosphate = RNA(n+1) + diphosphate. In terms of biological role, DNA-dependent RNA polymerase catalyzes the transcription of DNA into RNA using the four ribonucleoside triphosphates as substrates. The protein is DNA-directed RNA polymerase subunit beta of Caulobacter vibrioides (strain ATCC 19089 / CIP 103742 / CB 15) (Caulobacter crescentus).